We begin with the raw amino-acid sequence, 70 residues long: Uteroglobin (70 aa).

Belongs to the secretoglobin family. Antiparallel homodimer; disulfide-linked. Interaction with LMBR1L is controversial. Club cells (nonciliated cells of the surface epithelium of the pulmonary airways).

The protein resides in the secreted. In terms of biological role, binds phosphatidylcholine, phosphatidylinositol, polychlorinated biphenyls (PCB) and weakly progesterone, potent inhibitor of phospholipase A2. The polypeptide is Uteroglobin (SCGB1A1) (Macaca fuscata fuscata (Japanese macaque)).